We begin with the raw amino-acid sequence, 212 residues long: Large ribosomal subunit protein uL3 (212 aa).

Polar residues predominate over residues Ala-135–Pro-155. The segment at Ala-135–Lys-162 is disordered. Gln-153 is modified (N5-methylglutamine).

Belongs to the universal ribosomal protein uL3 family. Part of the 50S ribosomal subunit. Forms a cluster with proteins L14 and L19. Methylated by PrmB.

In terms of biological role, one of the primary rRNA binding proteins, it binds directly near the 3'-end of the 23S rRNA, where it nucleates assembly of the 50S subunit. The chain is Large ribosomal subunit protein uL3 from Psychrobacter arcticus (strain DSM 17307 / VKM B-2377 / 273-4).